Reading from the N-terminus, the 369-residue chain is Glycine oxidase (369 aa).

FAD-binding positions include 14-15 (II), 34-35 (ES), 42-43 (AT), 47-49 (AGM), and Val174. Substrate is bound by residues Arg302 and Arg329. 327–333 (HFRNGIL) serves as a coordination point for FAD.

It belongs to the DAO family. ThiO subfamily. As to quaternary structure, homotetramer. FAD serves as cofactor.

The enzyme catalyses glycine + O2 + H2O = glyoxylate + H2O2 + NH4(+). It carries out the reaction glyphosate + O2 + H2O = aminomethylphosphonate + glyoxylate + H2O2 + H(+). The catalysed reaction is N-ethylglycine + O2 + H2O = ethylamine + glyoxylate + H2O2. It catalyses the reaction sarcosine + O2 + H2O = methylamine + glyoxylate + H2O2. The enzyme catalyses D-alanine + O2 + H2O = pyruvate + H2O2 + NH4(+). It functions in the pathway cofactor biosynthesis; thiamine diphosphate biosynthesis. Its function is as follows. Catalyzes the FAD-dependent oxidative deamination of glycine, leading to glyoxylate, ammonia and hydrogen peroxide. Is also able to act on various amines and D-amino acids to yield the corresponding alpha-keto acids, ammonia/amine, and hydrogen peroxide. Can also oxidize the herbicide glyphosate (N-phosphonomethylglycine), and thus may be involved in the degradation pathway that allows B.licheniformis J33-8 to grow with glyphosate as the sole source of carbon. Is essential for thiamine biosynthesis since the oxidation of glycine catalyzed by ThiO generates the glycine imine intermediate (dehydroglycine) required for the biosynthesis of the thiazole ring of thiamine pyrophosphate. In Bacillus licheniformis, this protein is Glycine oxidase.